Reading from the N-terminus, the 460-residue chain is Bifunctional protein GlmU (460 aa).

The segment at 1-229 (MSHYAIILAA…FEESLGVNDR (229 aa)) is pyrophosphorylase. UDP-N-acetyl-alpha-D-glucosamine contacts are provided by residues 8 to 11 (LAAG), lysine 22, glutamine 72, and 77 to 78 (GT). Position 102 (aspartate 102) interacts with Mg(2+). Glycine 139, glutamate 154, asparagine 169, and asparagine 227 together coordinate UDP-N-acetyl-alpha-D-glucosamine. Residue asparagine 227 coordinates Mg(2+). The interval 230 to 250 (VALATAEDVMRRRINKAHMIN) is linker. Positions 251–460 (GVTFQNPNAT…KKPHHPSQQK (210 aa)) are N-acetyltransferase. Positions 332 and 350 each coordinate UDP-N-acetyl-alpha-D-glucosamine. Histidine 362 functions as the Proton acceptor in the catalytic mechanism. UDP-N-acetyl-alpha-D-glucosamine is bound by residues tyrosine 365 and asparagine 376. Acetyl-CoA is bound by residues alanine 379, 385–386 (NY), serine 404, alanine 422, and arginine 439.

In the N-terminal section; belongs to the N-acetylglucosamine-1-phosphate uridyltransferase family. It in the C-terminal section; belongs to the transferase hexapeptide repeat family. As to quaternary structure, homotrimer. Requires Mg(2+) as cofactor.

It localises to the cytoplasm. The catalysed reaction is alpha-D-glucosamine 1-phosphate + acetyl-CoA = N-acetyl-alpha-D-glucosamine 1-phosphate + CoA + H(+). It carries out the reaction N-acetyl-alpha-D-glucosamine 1-phosphate + UTP + H(+) = UDP-N-acetyl-alpha-D-glucosamine + diphosphate. It functions in the pathway nucleotide-sugar biosynthesis; UDP-N-acetyl-alpha-D-glucosamine biosynthesis; N-acetyl-alpha-D-glucosamine 1-phosphate from alpha-D-glucosamine 6-phosphate (route II): step 2/2. It participates in nucleotide-sugar biosynthesis; UDP-N-acetyl-alpha-D-glucosamine biosynthesis; UDP-N-acetyl-alpha-D-glucosamine from N-acetyl-alpha-D-glucosamine 1-phosphate: step 1/1. The protein operates within bacterial outer membrane biogenesis; LPS lipid A biosynthesis. Functionally, catalyzes the last two sequential reactions in the de novo biosynthetic pathway for UDP-N-acetylglucosamine (UDP-GlcNAc). The C-terminal domain catalyzes the transfer of acetyl group from acetyl coenzyme A to glucosamine-1-phosphate (GlcN-1-P) to produce N-acetylglucosamine-1-phosphate (GlcNAc-1-P), which is converted into UDP-GlcNAc by the transfer of uridine 5-monophosphate (from uridine 5-triphosphate), a reaction catalyzed by the N-terminal domain. The sequence is that of Bifunctional protein GlmU from Streptococcus thermophilus (strain CNRZ 1066).